A 183-amino-acid chain; its full sequence is MASSLMSNAATTMAAATTTAQANMVAPFNGLKSVSAFPVTRKNNDITSVASNGGRVQCMQVWPPLGKKKFETLSYLPPLSEESLMKEVQYLLNNGWVPCLEFEPTHGFVYREHGNTPGYYDGRYWTMWKLPMFGCTDPSQVVAELEEAKKAYPEAFIRIIGFDNVRQVQCISFIAYKPASYDA.

A chloroplast-targeting transit peptide spans 1-57; it reads MASSLMSNAATTMAAATTTAQANMVAPFNGLKSVSAFPVTRKNNDITSVASNGGRVQ.

Belongs to the RuBisCO small chain family. Heterohexadecamer of 8 large and 8 small subunits.

The protein localises to the plastid. It localises to the chloroplast. RuBisCO catalyzes two reactions: the carboxylation of D-ribulose 1,5-bisphosphate, the primary event in carbon dioxide fixation, as well as the oxidative fragmentation of the pentose substrate. Both reactions occur simultaneously and in competition at the same active site. Although the small subunit is not catalytic it is essential for maximal activity. The protein is Ribulose bisphosphate carboxylase small subunit, chloroplastic 3 of Mesembryanthemum crystallinum (Common ice plant).